The sequence spans 562 residues: Matrix metalloproteinase-25 (562 aa).

Residues 1–21 (MRLRLRLLALLLLLLAPPARA) form the signal peptide. Positions 22–107 (PKPSAQDVSL…VAGLVRRRRR (86 aa)) are excised as a propeptide. Residues 88 to 95 (PRCSLPDV) carry the Cysteine switch motif. The Zn(2+) site is built by C90 and H233. The active site involves E234. Residues H237 and H243 each coordinate Zn(2+). The disordered stretch occupies residues 278–313 (LYGKAPQTPYDKPTRKPLAPPPQPPASPTHSPSFPI). A compositionally biased stretch (pro residues) spans 295-304 (LAPPPQPPAS). 4 Hemopexin repeats span residues 314–363 (PDRC…WEGL), 367–412 (VRVV…GLPP), 413–461 (GEEV…EGAP), and 462–508 (PSPD…WLDC). Cysteines 317 and 508 form a disulfide. Residues 490 to 526 (SIKTEPDAPQPMGPNWLDCPAPSSGPRAPRPPKATPV) are disordered. Residue A539 is the site of GPI-anchor amidated alanine attachment. Residues 540-562 (AGRWPAPIPLLLLPLLVGGVASR) constitute a propeptide, removed in mature form.

Belongs to the peptidase M10A family. The cofactor is Zn(2+). Ca(2+) is required as a cofactor. In terms of processing, the precursor is cleaved by a furin endopeptidase. As to expression, expressed predominantly in leukocytes, lung and spleen. Expressed also in colon carcinoma, astrocytoma and glioblastomas.

It is found in the cell membrane. Its subcellular location is the secreted. The protein resides in the extracellular space. The protein localises to the extracellular matrix. Its function is as follows. May activate progelatinase A. The chain is Matrix metalloproteinase-25 (MMP25) from Homo sapiens (Human).